The sequence spans 683 residues: Methionine--tRNA ligase (683 aa).

The 'HIGH' region motif lies at 15 to 25 (PYANGSIHLGH). Cysteine 146, cysteine 149, cysteine 159, and cysteine 162 together coordinate Zn(2+). Positions 332–336 (KMSKS) match the 'KMSKS' region motif. Lysine 335 is a binding site for ATP. The 102-residue stretch at 582-683 (DFAKVDLRIA…QGAQAGMRVM (102 aa)) folds into the tRNA-binding domain.

This sequence belongs to the class-I aminoacyl-tRNA synthetase family. MetG type 1 subfamily. As to quaternary structure, homodimer. It depends on Zn(2+) as a cofactor.

The protein resides in the cytoplasm. It carries out the reaction tRNA(Met) + L-methionine + ATP = L-methionyl-tRNA(Met) + AMP + diphosphate. Is required not only for elongation of protein synthesis but also for the initiation of all mRNA translation through initiator tRNA(fMet) aminoacylation. In Vibrio cholerae serotype O1 (strain ATCC 39315 / El Tor Inaba N16961), this protein is Methionine--tRNA ligase.